A 65-amino-acid chain; its full sequence is Small ribosomal subunit protein eS27 (65 aa).

Cys-20, Cys-23, Cys-39, and Cys-42 together coordinate Zn(2+). A C4-type zinc finger spans residues 20–42 (CIDCGNEQIVFSHPATKVRCLVC).

This sequence belongs to the eukaryotic ribosomal protein eS27 family. As to quaternary structure, part of the 30S ribosomal subunit. The cofactor is Zn(2+).

The chain is Small ribosomal subunit protein eS27 from Thermococcus gammatolerans (strain DSM 15229 / JCM 11827 / EJ3).